The sequence spans 469 residues: 3-isopropylmalate dehydratase large subunit (469 aa).

Cysteine 350, cysteine 410, and cysteine 413 together coordinate [4Fe-4S] cluster.

This sequence belongs to the aconitase/IPM isomerase family. LeuC type 1 subfamily. As to quaternary structure, heterodimer of LeuC and LeuD. [4Fe-4S] cluster serves as cofactor.

It catalyses the reaction (2R,3S)-3-isopropylmalate = (2S)-2-isopropylmalate. Its pathway is amino-acid biosynthesis; L-leucine biosynthesis; L-leucine from 3-methyl-2-oxobutanoate: step 2/4. Its function is as follows. Catalyzes the isomerization between 2-isopropylmalate and 3-isopropylmalate, via the formation of 2-isopropylmaleate. The sequence is that of 3-isopropylmalate dehydratase large subunit from Brucella anthropi (strain ATCC 49188 / DSM 6882 / CCUG 24695 / JCM 21032 / LMG 3331 / NBRC 15819 / NCTC 12168 / Alc 37) (Ochrobactrum anthropi).